Consider the following 141-residue polypeptide: Large ribosomal subunit protein uL14m (141 aa).

The N-terminal 19 residues, 1-19 (MALSLSGLILPKLMQQRAF), are a transit peptide targeting the mitochondrion.

It belongs to the universal ribosomal protein uL14 family. As to quaternary structure, component of the mitochondrial ribosome large subunit (39S) which comprises a 16S rRNA and about 50 distinct proteins. Interacts with MALSU1.

It is found in the mitochondrion. May form part of 2 intersubunit bridges in the assembled ribosome. Upon binding to MALSU1, intersubunit bridge formation is blocked, preventing ribosome formation and repressing translation. The sequence is that of Large ribosomal subunit protein uL14m (mrpl14) from Danio rerio (Zebrafish).